A 327-amino-acid chain; its full sequence is Tyrosine--tRNA ligase (327 aa).

Position 33 (tyrosine 33) interacts with L-tyrosine. The 'HIGH' region motif lies at 38-46; the sequence is PSGVLHLGH. Positions 154, 158, 161, and 176 each coordinate L-tyrosine. A 'KMSKS' region motif is present at residues 212 to 216; that stretch reads KMSSS. Serine 215 is a binding site for ATP.

This sequence belongs to the class-I aminoacyl-tRNA synthetase family. TyrS type 3 subfamily. In terms of assembly, homodimer.

It is found in the cytoplasm. It carries out the reaction tRNA(Tyr) + L-tyrosine + ATP = L-tyrosyl-tRNA(Tyr) + AMP + diphosphate + H(+). Its function is as follows. Catalyzes the attachment of tyrosine to tRNA(Tyr) in a two-step reaction: tyrosine is first activated by ATP to form Tyr-AMP and then transferred to the acceptor end of tRNA(Tyr). This chain is Tyrosine--tRNA ligase, found in Halobacterium salinarum (strain ATCC 29341 / DSM 671 / R1).